Here is a 351-residue protein sequence, read N- to C-terminus: Pinopsin (351 aa).

At 1 to 30 (MSSNSSQAPPNGTPGPFDGPQWPYQAPQST) the chain is on the extracellular side. A glycan (N-linked (GlcNAc...) asparagine) is linked at Asn4. A helical membrane pass occupies residues 31–55 (YVGVAVLMGTVVACASVVNGLVIVV). The Cytoplasmic portion of the chain corresponds to 56–67 (SICYKKLRSPLN). Residues 68–92 (YILVNLAVADLLVTLCGSSVSLSNN) form a helical membrane-spanning segment. Topologically, residues 93–107 (INGFFVFGRRMCELE) are extracellular. Cysteines 104 and 181 form a disulfide. The helical transmembrane segment at 108–127 (GFMVSLTGIVGLWSLAILAL) threads the bilayer. Over 128-146 (ERYVVVCKPLGDFQFQRRH) the chain is Cytoplasmic. A helical transmembrane segment spans residues 147 to 170 (AVSGCAFTWGWALLWSAPPLLGWS). Residues 171–194 (SYVPEGLRTSCGPNWYTGGSNNNS) lie on the Extracellular side of the membrane. Asn192 is a glycosylation site (N-linked (GlcNAc...) asparagine). A helical transmembrane segment spans residues 195–222 (YILSLFVTCFVLPLSLILFSYTNLLLTL). The Cytoplasmic portion of the chain corresponds to 223–244 (RAAAAQQKEADTTQRAEREVTR). The chain crosses the membrane as a helical span at residues 245-268 (MVIVMVMAFLLCWLPYSTFALVVA). Residues 269–276 (THKGIIIQ) lie on the Extracellular side of the membrane. Residues 277-301 (PVLASLPSYFSKTATVYNPIIYVFM) form a helical membrane-spanning segment. At Lys288 the chain carries N6-(retinylidene)lysine. The Cytoplasmic segment spans residues 302-351 (NKQFQSCLLEMLCCGYQPQRTGKASPGTPGPHADVTAAGLRNKVMPAHPV). S-palmitoyl cysteine attachment occurs at residues Cys314 and Cys315.

This sequence belongs to the G-protein coupled receptor 1 family. Opsin subfamily. Phosphorylated on some or all of the serine and threonine residues present in the C-terminal region. In terms of tissue distribution, pineal gland.

It localises to the membrane. Produces a slow and prolonged phototransduction response consistent with the non-visual function of pineal photoreception. This Gallus gallus (Chicken) protein is Pinopsin.